Here is a 331-residue protein sequence, read N- to C-terminus: UPF0194 membrane protein Ent638_1286 (331 aa).

The first 16 residues, 1-16, serve as a signal peptide directing secretion; the sequence is MKKPVVVILAVVVLLA. Residues 107–208 adopt a coiled-coil conformation; sequence EEVAQAEAAV…LDLHDTTLIA (102 aa).

It belongs to the UPF0194 family.

The protein localises to the periplasm. This Enterobacter sp. (strain 638) protein is UPF0194 membrane protein Ent638_1286.